Reading from the N-terminus, the 892-residue chain is Exo-beta-D-glucosaminidase (892 aa).

Residues Met1–Ala18 form the signal peptide. Positions Ala19–Lys28 are excised as a propeptide. Residues Asn196, Asn336, and Asn440 are each glycosylated (N-linked (GlcNAc...) asparagine). Asp464 serves as the catalytic Proton donor. Glu539 acts as the Nucleophile in catalysis. Residues Asn557, Asn578, Asn689, and Asn825 are each glycosylated (N-linked (GlcNAc...) asparagine).

This sequence belongs to the glycosyl hydrolase 2 family. In terms of assembly, monomer.

The protein localises to the secreted. It localises to the extracellular space. It carries out the reaction Hydrolysis of chitosan or chitosan oligosaccharides to remove successive D-glucosamine residues from the non-reducing termini.. Its function is as follows. Hydrolyzes chitosan and chitooligosaccharides with retention of anomeric configuration. Has no activity against beta-D-galactoside, beta-D-glucuronide, beta-D-mannoside, chitin, glycol chitosan, cellulose, N,N'-diacetylchitibiose and pNP-GlcNAc. This is Exo-beta-D-glucosaminidase from Hypocrea jecorina (Trichoderma reesei).